The chain runs to 327 residues: Undecaprenyl-phosphate 4-deoxy-4-formamido-L-arabinose transferase (327 aa).

The Cytoplasmic portion of the chain corresponds to 1-235; the sequence is MFDAAPIKKV…TCLTTTPLRL (235 aa). The helical transmembrane segment at 236–256 threads the bilayer; it reads LSLLGSVIAIGGFSLSVLLIV. Residues 257–269 lie on the Periplasmic side of the membrane; that stretch reads LRLALGPQWAAEG. A helical transmembrane segment spans residues 270–290; that stretch reads VFMLFAVLFTFIGAQFIGMGL. Residues 291-327 are Cytoplasmic-facing; the sequence is LGEYIGRIYNDVRARPRYFVQQVIYPESTPFTEESHQ.

Belongs to the glycosyltransferase 2 family.

It is found in the cell inner membrane. The catalysed reaction is UDP-4-deoxy-4-formamido-beta-L-arabinose + di-trans,octa-cis-undecaprenyl phosphate = 4-deoxy-4-formamido-alpha-L-arabinopyranosyl di-trans,octa-cis-undecaprenyl phosphate + UDP. Its pathway is glycolipid biosynthesis; 4-amino-4-deoxy-alpha-L-arabinose undecaprenyl phosphate biosynthesis; 4-amino-4-deoxy-alpha-L-arabinose undecaprenyl phosphate from UDP-4-deoxy-4-formamido-beta-L-arabinose and undecaprenyl phosphate: step 1/2. It functions in the pathway bacterial outer membrane biogenesis; lipopolysaccharide biosynthesis. Its function is as follows. Catalyzes the transfer of 4-deoxy-4-formamido-L-arabinose from UDP to undecaprenyl phosphate. The modified arabinose is attached to lipid A and is required for resistance to polymyxin and cationic antimicrobial peptides. This chain is Undecaprenyl-phosphate 4-deoxy-4-formamido-L-arabinose transferase, found in Salmonella agona (strain SL483).